A 499-amino-acid polypeptide reads, in one-letter code: Apolipoprotein N-acyltransferase (499 aa).

The next 6 helical transmembrane spans lie at 17–37, 38–58, 84–104, 131–151, 163–183, and 198–218; these read VLAGIGIAHGGLLWMAPALAL, LWSACRFPVAASLWGFVAVLL, ASIWLFCGAAAAVLVGLWAWL, IWGLAEVLLAGSPLFWIGVGG, LARWFGAGGLATLQLLIGWWL, and RSLLVGLLCLLLAHGFGWSLL. Positions 232–458 constitute a CN hydrolase domain; it reads WQPAIPTRSK…EGVGLADLHF (227 aa). The active-site Proton acceptor is E273. The active site involves K322. The active-site Nucleophile is the C370. Residues 474–494 form a helical membrane-spanning segment; sequence IGLMLFAVVGLGLSRVRSWLI.

The protein belongs to the CN hydrolase family. Apolipoprotein N-acyltransferase subfamily.

Its subcellular location is the cell inner membrane. The catalysed reaction is N-terminal S-1,2-diacyl-sn-glyceryl-L-cysteinyl-[lipoprotein] + a glycerophospholipid = N-acyl-S-1,2-diacyl-sn-glyceryl-L-cysteinyl-[lipoprotein] + a 2-acyl-sn-glycero-3-phospholipid + H(+). The protein operates within protein modification; lipoprotein biosynthesis (N-acyl transfer). Its function is as follows. Catalyzes the phospholipid dependent N-acylation of the N-terminal cysteine of apolipoprotein, the last step in lipoprotein maturation. The protein is Apolipoprotein N-acyltransferase of Prochlorococcus marinus (strain MIT 9313).